We begin with the raw amino-acid sequence, 429 residues long: Protein AST1 (429 aa).

In terms of assembly, interacts with PMA1.

Its subcellular location is the cell membrane. The protein resides in the membrane raft. The protein localises to the golgi apparatus membrane. It is found in the late endosome membrane. Its function is as follows. Lipid raft-associated protein involved in the targeting of PMA1 from Golgi to the plasma membrane. May induce clustering of PMA1, which facilitates partition of PMA1 into lipid rafts after leaving the ER and its transport to the cell surface. The polypeptide is Protein AST1 (Saccharomyces cerevisiae (strain ATCC 204508 / S288c) (Baker's yeast)).